We begin with the raw amino-acid sequence, 1033 residues long: Ubiquitin carboxyl-terminal hydrolase 48 (1033 aa).

The USP domain maps to 89-419 (VGLTNLGATC…NAYMLVYRLQ (331 aa)). Cys98 acts as the Nucleophile in catalysis. Catalysis depends on His351, which acts as the Proton acceptor. 3 DUSP domains span residues 457–552 (QSVA…KALC), 567–690 (NQLN…NKEC), and 710–823 (MMAS…RTRA). Residues 610–639 (EQDEDAEHSNGKLNGNAPNKDEVNEEKREE) are disordered. The disordered stretch occupies residues 878 to 920 (APELNVSSSEAEEEREENKPEGEQDPDFNQSNGGAKRQKLSHQ). A Ubiquitin-like domain is found at 931–1007 (RRSTRHRKVR…ILLKADEPIA (77 aa)).

This sequence belongs to the peptidase C19 family.

Its subcellular location is the cytoplasm. The protein resides in the nucleus. It carries out the reaction Thiol-dependent hydrolysis of ester, thioester, amide, peptide and isopeptide bonds formed by the C-terminal Gly of ubiquitin (a 76-residue protein attached to proteins as an intracellular targeting signal).. Its function is as follows. Recognizes and hydrolyzes the peptide bond at the C-terminal Gly of ubiquitin. Involved in the processing of poly-ubiquitin precursors as well as that of ubiquitinated proteins. The protein is Ubiquitin carboxyl-terminal hydrolase 48 (USP48) of Gallus gallus (Chicken).